A 716-amino-acid chain; its full sequence is Polyribonucleotide nucleotidyltransferase (716 aa).

Asp-486 and Asp-492 together coordinate Mg(2+). One can recognise a KH domain in the interval 553-612 (PHIYNIKINPEKIKDVIGKGGAVIRALSDETDTKIDISDDGNITIAALSQKSAAFAQQRI). The S1 motif domain maps to 622-690 (GRIYQGTVTR…RQGRIRLSIK (69 aa)).

This sequence belongs to the polyribonucleotide nucleotidyltransferase family. Component of the RNA degradosome, which is a multiprotein complex involved in RNA processing and mRNA degradation. The cofactor is Mg(2+).

It is found in the cytoplasm. The catalysed reaction is RNA(n+1) + phosphate = RNA(n) + a ribonucleoside 5'-diphosphate. Functionally, involved in mRNA degradation. Catalyzes the phosphorolysis of single-stranded polyribonucleotides processively in the 3'- to 5'-direction. This chain is Polyribonucleotide nucleotidyltransferase, found in Hamiltonella defensa subsp. Acyrthosiphon pisum (strain 5AT).